Here is a 218-residue protein sequence, read N- to C-terminus: Protein-lysine N-methyltransferase M142.8 (218 aa).

Belongs to the class I-like SAM-binding methyltransferase superfamily. EFM5 family.

The protein localises to the cytoplasm. Its function is as follows. S-adenosyl-L-methionine-dependent protein-lysine N-methyltransferase that methylates elongation factor 1-alpha. In Caenorhabditis elegans, this protein is Protein-lysine N-methyltransferase M142.8.